The following is a 496-amino-acid chain: Probable G-protein coupled receptor K01A12.3 (496 aa).

Over 1-19 the chain is Extracellular; sequence MESVTRHRADMISFFTFDS. The helical transmembrane segment at 20–40 threads the bilayer; that stretch reads YISIVGVAYTAVGLLGVFCNV. Over 41 to 58 the chain is Cytoplasmic; the sequence is TTVIMILTNRVFRLSAYT. The chain crosses the membrane as a helical span at residues 59-79; the sequence is IMANVALADSIVMLIAGVACG. Over 80–128 the chain is Extracellular; sequence MDVMWPNPNDLTSFIPSLEEPYQKIAPVSLRNDSKTDSSAAGFETGNIH. Residue asparagine 111 is glycosylated (N-linked (GlcNAc...) asparagine). Residues 129–149 traverse the membrane as a helical segment; it reads AVLSFSFVAAWTAGVISYAML. At 150–169 the chain is on the cytoplasmic side; it reads GTNRCIAICYYGTKARALNQ. The chain crosses the membrane as a helical span at residues 170–190; that stretch reads VSVAVACSASTWIVGIAAALV. Residues 191 to 216 are Extracellular-facing; it reads GTLSQPMIGIQRTMWSISFLEPRPHT. The helical transmembrane segment at 217-237 threads the bilayer; the sequence is TLFFTLLCAANLLGLGAQWVC. Residues 238–285 are Cytoplasmic-facing; the sequence is STLVLLKIRQVKKKISKNKLNQNSANRFRKQVILALNEIIVTGNFKAR. A helical transmembrane segment spans residues 286-306; it reads LTFQFFYPSILCTISTFLFFI. Topologically, residues 307 to 318 are extracellular; sequence KPYAFEYLSGWQ. A helical transmembrane segment spans residues 319 to 339; sequence LVILHLLWLCNHTCNPFIYAY. Topologically, residues 340 to 496 are cytoplasmic; it reads FNDRMRLTYK…WVKFAKKASI (157 aa). The tract at residues 451–470 is disordered; that stretch reads TKELESAHNQGGSSRFDSER.

It belongs to the G-protein coupled receptor 1 family.

The protein resides in the cell membrane. The polypeptide is Probable G-protein coupled receptor K01A12.3 (Caenorhabditis elegans).